The sequence spans 318 residues: 2-dehydro-3-deoxygalactonokinase (318 aa).

Substrate contacts are provided by residues G35–N39, Y90, Y105–R107, and R169. Residues N167–R169, T228–G233, and G257–D260 contribute to the ATP site. The substrate site is built by D260 and D296. The active-site Proton acceptor is D260.

Belongs to the carbohydrate kinase PfkB family. In terms of assembly, homohexamer.

The catalysed reaction is 2-dehydro-3-deoxy-D-galactonate + ATP = 2-dehydro-3-deoxy-6-phospho-D-galactonate + ADP + H(+). Functionally, involved in galactose catabolism. Catalyzes the phosphorylation of 2-keto-3-deoxygalactonate (KDGal) to produce 2-keto-3-deoxy-6-phosphogalactonate (KDPGal). Can also phosphorylate 2-keto-3-deoxygluconate (KDG) to 2-keto-3-deoxy-6-phosphogluconate (KDPG), but the catalytic efficiency for KDGal is 50-fold higher than for KDG. This chain is 2-dehydro-3-deoxygalactonokinase, found in Haloferax volcanii (strain ATCC 29605 / DSM 3757 / JCM 8879 / NBRC 14742 / NCIMB 2012 / VKM B-1768 / DS2) (Halobacterium volcanii).